The following is a 283-amino-acid chain: Putative aquaporin NIP4-1 (283 aa).

N-acetylmethionine is present on M1. 2 helical membrane-spanning segments follow: residues 45–65 (LIAEMIGTYFIVFSGCGVVVV) and 70–90 (GGTITFPGICVTWGLIVMVMI). The NPA 1 motif lies at 102 to 104 (NPA). The next 3 helical transmembrane spans lie at 122-142 (LYIGAQFAGSLLASLTLRLMF), 161-181 (ALVAEIIISFLLMFVISGVAT), and 189-209 (LAGIAVGMTIMVNVFVAGPIS). Positions 214 to 216 (NPA) match the NPA 2 motif. A helical membrane pass occupies residues 231–251 (IWVYIVGPVLGVISGGFVYNL). A Phosphoserine modification is found at S267.

The protein belongs to the MIP/aquaporin (TC 1.A.8) family. NIP (TC 1.A.8.12) subfamily.

It localises to the membrane. Its function is as follows. Potential aquaporin, which may facilitate the transport of water and small neutral solutes across cell membranes. The chain is Putative aquaporin NIP4-1 (NIP4-1) from Arabidopsis thaliana (Mouse-ear cress).